A 130-amino-acid polypeptide reads, in one-letter code: Small ribosomal subunit protein uS9 (130 aa).

The protein belongs to the universal ribosomal protein uS9 family.

The sequence is that of Small ribosomal subunit protein uS9 from Hahella chejuensis (strain KCTC 2396).